The chain runs to 810 residues: RING finger protein unkempt homolog (810 aa).

Residues 1–24 (MSKGPGPGGSAASSAPPAATAQVL) form a disordered region. A compositionally biased stretch (low complexity) spans 10–19 (SAASSAPPAA). 5 C3H1-type zinc fingers span residues 84-113 (YSPD…HRTT), 124-154 (YYKT…HGPH), 215-241 (NYKT…HNSK), 251-285 (KYRS…HTRT), and 293-321 (IYKS…HVEQ). A disordered region spans residues 239 to 265 (NSKDRRRSPRKHKYRSSPCPNVKHGDE). Ser-240 bears the Phosphoserine mark. A compositionally biased stretch (basic residues) spans 241–253 (KDRRRSPRKHKYR). Residues 324 to 343 (LSDDLQPSSTVSSPTQPGPV) are disordered. The segment covering 329 to 343 (QPSSTVSSPTQPGPV) has biased composition (low complexity). A phosphoserine mark is found at Ser-374, Ser-378, and Ser-385. The span at 569 to 585 (SASFHSASPSPPVSLSS) shows a compositional bias: low complexity. Residues 569-602 (SASFHSASPSPPVSLSSHFLQQPQGHLSQSENTF) form a disordered region. The span at 586-602 (HFLQQPQGHLSQSENTF) shows a compositional bias: polar residues. A Phosphoserine modification is found at Ser-631. Residues 643 to 723 (GAAELARLRQ…QEELERLHSG (81 aa)) adopt a coiled-coil conformation. The segment at 766-801 (SVKCLKCQEQNRAVLPCQHAVLCELCAEGSECPVCQ) adopts an RING-type; degenerate zinc-finger fold.

The protein belongs to the unkempt family.

It is found in the cytoplasm. In terms of biological role, sequence-specific RNA-binding protein which plays an important role in the establishment and maintenance of the early morphology of cortical neurons during embryonic development. Acts as a translation repressor and controls a translationally regulated cell morphology program to ensure proper structuring of the nervous system. Translational control depends on recognition of its binding element within target mRNAs which consists of a mandatory UAG trimer upstream of a U/A-rich motif. Associated with polysomes. In Canis lupus familiaris (Dog), this protein is RING finger protein unkempt homolog (UNK).